The sequence spans 232 residues: MLSGDIPPNQTVYLRNLNEKVKKEELKRSLYALCSQYGRILDVVALKTPKLRGQAWVVFSEITAATNAFRGLQEFDFYGKRMRVQYAKTRSDCLATEDGSTAPKEKRKKQEEKAAEKKRRAEEAQQSGPNAAAQSNGTGYQASRLGKTSQEPPAPPNNILFIQNLPAETTSMMLQILFQQYPGFREVRMIEAKPGIAFVEYEDDSQSMVAMQALQGFKITPYNPMAISYAKK.

Residues 10 to 89 form the RRM 1 domain; that stretch reads QTVYLRNLNE…KRMRVQYAKT (80 aa). A disordered region spans residues 90–159; it reads RSDCLATEDG…QEPPAPPNNI (70 aa). The span at 108–123 shows a compositional bias: basic and acidic residues; that stretch reads KKQEEKAAEKKRRAEE. Residues 127–151 are compositionally biased toward polar residues; sequence SGPNAAAQSNGTGYQASRLGKTSQE. In terms of domain architecture, RRM 2 spans 158–232; that stretch reads NILFIQNLPA…NPMAISYAKK (75 aa).

This sequence belongs to the RRM U1 A/B'' family. As to quaternary structure, component of the spliceosome where it is associated with snRNP U2.

The protein resides in the nucleus. Its subcellular location is the cajal body. It is found in the nucleoplasm. It localises to the cytoplasm. Involved in nuclear pre-mRNA splicing. This is U2 small nuclear ribonucleoprotein B'' from Oryza sativa subsp. japonica (Rice).